The sequence spans 170 residues: Thialysine N-epsilon-acetyltransferase (170 aa).

Residues 4–166 (VLIREAKEGD…FRFEGEAMRE (163 aa)) form the N-acetyltransferase domain. 27–28 (YE) is a binding site for substrate. N6-acetyllysine is present on K29. E92 is a substrate binding site. Acetyl-CoA contacts are provided by residues 94-96 (IYV), 102-107 (GQGIGS), 133-135 (NKK), and Y140. The active-site Proton donor is Y140. Substrate is bound at residue E152.

The protein belongs to the acetyltransferase family. In terms of assembly, homodimer.

It is found in the cytoplasm. It carries out the reaction S-(2-aminoethyl)-L-cysteine + acetyl-CoA = S-(2-acetamidoethyl)-L-cysteine + CoA + H(+). It catalyses the reaction an alkane-alpha,omega-diamine + acetyl-CoA = an N-acetylalkane-alpha,omega-diamine + CoA + H(+). Functionally, catalyzes the N-acetylation of the amino acid thialysine (S-(2-aminoethyl)-L-cysteine), a L-lysine analog with the 4-methylene group substituted with a sulfur. May also catalyze acetylation of polyamines, such as norspermidine, spermidine or spermine. However, ability to acetylate polyamines is weak, suggesting that it does not act as a diamine acetyltransferase in vivo. This is Thialysine N-epsilon-acetyltransferase from Sus scrofa (Pig).